Reading from the N-terminus, the 465-residue chain is Alpha-2A adrenergic receptor (465 aa).

The Extracellular portion of the chain corresponds to 1–48; the sequence is MFRQEQPLAEGSFAPMGSLQPDAGNASWNGTEAPGGGARATPYSLQVT. 2 N-linked (GlcNAc...) asparagine glycosylation sites follow: Asn-25 and Asn-29. A helical transmembrane segment spans residues 49–74; the sequence is LTLVCLAGLLMLLTVFGNVLVIIAVF. At 75–85 the chain is on the cytoplasmic side; it reads TSRALKAPQNL. A helical transmembrane segment spans residues 86-111; sequence FLVSLASADILVATLVIPFSLANEVM. The Extracellular portion of the chain corresponds to 112–121; it reads GYWYFGKAWC. A disulfide bridge connects residues Cys-121 and Cys-203. The helical transmembrane segment at 122–144 threads the bilayer; the sequence is EIYLALDVLFCTSSIVHLCAISL. Over 145-166 the chain is Cytoplasmic; it reads DRYWSITQAIEYNLKRTPRRIK. Residues 167-187 form a helical membrane-spanning segment; it reads AIIITVWVISAVISFPPLISI. Over 188–209 the chain is Extracellular; it reads EKKGGGGGPQPAEPRCEINDQK. A helical membrane pass occupies residues 210–232; that stretch reads WYVISSCIGSFFAPCLIMILVYV. Residues 233–389 are Cytoplasmic-facing; sequence RIYQIAKRRT…RQNREKRFTF (157 aa). The disordered stretch occupies residues 242 to 368; it reads TRVPPSRRGP…TPAAGPGEER (127 aa). Residues 313–330 show a composition bias toward basic and acidic residues; the sequence is SSDHAERPPGPRRPERGP. Ser-346 is subject to Phosphoserine. Arg-368 carries the post-translational modification Omega-N-methylarginine. A helical membrane pass occupies residues 390 to 410; that stretch reads VLAVVIGVFVVCWFPFFFTYT. Residues 411–424 lie on the Extracellular side of the membrane; it reads LTAVGCSVPRTLFK. Residues 425–444 form a helical membrane-spanning segment; it reads FFFWFGYCNSSLNPVIYTIF. At 445 to 465 the chain is on the cytoplasmic side; sequence NHDFRRAFKKILCRGDRKRIV. Cys-457 is lipidated: S-palmitoyl cysteine.

The protein belongs to the G-protein coupled receptor 1 family. Adrenergic receptor subfamily. ADRA2A sub-subfamily.

It localises to the cell membrane. Functionally, alpha-2 adrenergic receptors mediate the catecholamine-induced inhibition of adenylate cyclase through the action of G proteins. The rank order of potency for agonists of this receptor is oxymetazoline &gt; clonidine &gt; epinephrine &gt; norepinephrine &gt; phenylephrine &gt; dopamine &gt; p-synephrine &gt; p-tyramine &gt; serotonin = p-octopamine. For antagonists, the rank order is yohimbine &gt; phentolamine = mianserine &gt; chlorpromazine = spiperone = prazosin &gt; propanolol &gt; alprenolol = pindolol. The protein is Alpha-2A adrenergic receptor of Homo sapiens (Human).